The chain runs to 727 residues: Sodium-dependent neutral amino acid transporter SLC6A17 (727 aa).

Residues 1-68 (MPKNSKVTQR…DRPAWNSKLQ (68 aa)) lie on the Cytoplasmic side of the membrane. Ser13 and Ser20 each carry phosphoserine. The helical transmembrane segment at 69-89 (YILAQIGFSVGLGNIWRFPYL) threads the bilayer. At 90-96 (CQKNGGG) the chain is on the extracellular side. The chain crosses the membrane as a helical span at residues 97–116 (AYLVPYLVLLIIIGIPLFFL). Over 117–140 (ELAVGQRIRRGSIGVWHYVCPRLG) the chain is Cytoplasmic. The chain crosses the membrane as a helical span at residues 141-161 (GIGFSSCIVCLFVGLYYNVII). At 162–224 (GWSVFYFFKS…NSISESGGLN (63 aa)) the chain is on the extracellular side. The N-linked (GlcNAc...) asparagine glycan is linked to Asn186. Residues 225–243 (WKMTVCLLVAWSIVGMAVV) traverse the membrane as a helical segment. Residues 244–251 (KGIQSSGK) lie on the Cytoplasmic side of the membrane. Residues 252–269 (VMYFSSLFPYVVLACFLV) traverse the membrane as a helical segment. Over 270–304 (RGLLLRGAVDGILHMFTPKLDKMLDPQVWREAATQ) the chain is Extracellular. Residues 305–322 (VFFALGLGFGGVIAFSSY) traverse the membrane as a helical segment. The Cytoplasmic portion of the chain corresponds to 323–333 (NKQDNNCHFDA). Residues 334 to 355 (ALVSFINFFTSVLATLVVFAVL) traverse the membrane as a helical segment. Topologically, residues 356–451 (GFKANIMNEK…FIAFTEAMTH (96 aa)) are extracellular. Position 377 is a phosphotyrosine (Tyr377). Residue Asn393 is glycosylated (N-linked (GlcNAc...) asparagine). A helical membrane pass occupies residues 452–471 (FPASPFWSVMFFLMLINLGL). The Cytoplasmic portion of the chain corresponds to 472–494 (GSMIGTMAGITTPIIDTFKVPKE). The chain crosses the membrane as a helical span at residues 495–513 (MFTVGCCVFAFFVGLLFVQ). Over 514-528 (RSGNYFVTMFDDYSA) the chain is Extracellular. The chain crosses the membrane as a helical span at residues 529–549 (TLPLTVIVILENIAVAWIYGT). The Cytoplasmic portion of the chain corresponds to 550 to 569 (KKFMQELTEMLGFRPYRFYF). A helical transmembrane segment spans residues 570-591 (YMWKFVSPLCMAVLTTASIIQL). Over 592 to 618 (GVSPPGYSAWIKEEAAERYLYFPNWAM) the chain is Extracellular. The chain crosses the membrane as a helical span at residues 619–641 (ALLITLIAVATLPIPVVFILRHF). Residues 642–727 (HLLSDGSNTL…LLASTPESEL (86 aa)) are Cytoplasmic-facing. Phosphoserine is present on residues Ser665 and Ser701. Positions 680-727 (VPSEAPSPMPTHRSYLGPGSTSPLESSSHPNGRYGSGYLLASTPESEL) are disordered. Residues 698–709 (GSTSPLESSSHP) are compositionally biased toward polar residues.

The protein belongs to the sodium:neurotransmitter symporter (SNF) (TC 2.A.22) family. In terms of tissue distribution, found exclusively in the central nervous system and is more abundant in the cerebellum and the cerebral cortex. Expressed in PC-12 cell line.

It is found in the cytoplasmic vesicle. It localises to the secretory vesicle. The protein localises to the synaptic vesicle membrane. Its subcellular location is the postsynapse. The protein resides in the presynapse. It catalyses the reaction L-proline(in) + Na(+)(in) = L-proline(out) + Na(+)(out). The enzyme catalyses L-leucine(in) + Na(+)(in) = L-leucine(out) + Na(+)(out). The catalysed reaction is glycine(in) + Na(+)(in) = glycine(out) + Na(+)(out). It carries out the reaction L-alanine(in) + Na(+)(in) = L-alanine(out) + Na(+)(out). It catalyses the reaction L-glutamine(in) + Na(+)(in) = L-glutamine(out) + Na(+)(out). In terms of biological role, synaptic vesicle transporter with apparent selectivity for neutral amino acids. The transport is sodium-coupled but chloride-independent, likely driven by the proton electrochemical gradient generated by vacuolar H(+)-ATPase in an overall electrogenic mechanism. May contribute to the synaptic uptake of neurotransmitter precursors in a process coupled in part to vesicle exocytosis. The protein is Sodium-dependent neutral amino acid transporter SLC6A17 of Rattus norvegicus (Rat).